Here is a 264-residue protein sequence, read N- to C-terminus: Neurexophilin-2 (264 aa).

The N-terminal stretch at 1-22 is a signal peptide; the sequence is MRLRPLPLVVVPGLLQLLFCDS. The II stretch occupies residues 23 to 90; sequence KEVVHATEGL…WDWLANITEI (68 aa). 4 N-linked (GlcNAc...) asparagine glycosylation sites follow: N86, N139, N149, and N155. The interval 91–169 is III; the sequence is QEPLARTKRR…LVPPSKVVEF (79 aa). Positions 170–178 are IV (linker domain); it reads EVSPQSTLE. Residues 179–264 are v (Cys-rich); that stretch reads TKESKSFNCR…HSETPYLSSG (86 aa).

This sequence belongs to the neurexophilin family. Post-translationally, may be proteolytically processed at the boundary between the N-terminal non-conserved and the central conserved domain in neuron-like cells. As to expression, expressed in brain and kidney.

Its subcellular location is the secreted. Its function is as follows. May be signaling molecules that resemble neuropeptides and that act by binding to alpha-neurexins and possibly other receptors. The sequence is that of Neurexophilin-2 (NXPH2) from Homo sapiens (Human).